We begin with the raw amino-acid sequence, 289 residues long: MWAGCHPDAASLLRLLLAALLAAGALASGEYCHGWLDAQGVWRIGFQCPERFDGGDATICCGSCALRYCCSSADARLDQGGCDNDRQQGAGEPGRADKDGPDGSAVPIYVPFLIVGSVFVAFIVLGSLVAACCCRCLRPKQEPQLSRAPGGPRLVETIPMIPSASTSRGSSSRQSSTAASSSSSANSGARAPPTRSQTNCCLPEGTMNNVYVNMPTNFSVLNCQQATQIVPHQGQYLHPPFVGYTVQPDSVPLTPVPPFLDGLQTGYRQLQAPFPHTNSEQKMYPAVTV.

The N-terminal stretch at 1–27 is a signal peptide; it reads MWAGCHPDAASLLRLLLAALLAAGALA. The Extracellular portion of the chain corresponds to 28–104; that stretch reads SGEYCHGWLD…RADKDGPDGS (77 aa). The disordered stretch occupies residues 81-102; the sequence is GCDNDRQQGAGEPGRADKDGPD. Residues 105 to 125 form a helical membrane-spanning segment; that stretch reads AVPIYVPFLIVGSVFVAFIVL. The Cytoplasmic portion of the chain corresponds to 126 to 289; it reads GSLVAACCCR…EQKMYPAVTV (164 aa). The interval 162–198 is disordered; the sequence is PSASTSRGSSSRQSSTAASSSSSANSGARAPPTRSQT. Positions 163 to 191 are enriched in low complexity; the sequence is SASTSRGSSSRQSSTAASSSSSANSGARA.

This sequence belongs to the shisa family.

It is found in the endoplasmic reticulum membrane. Functionally, plays an essential role in the maturation of presomitic mesoderm cells by individual attenuation of both FGF and WNT signaling. The sequence is that of Protein shisa-2 homolog (SHISA2) from Bos taurus (Bovine).